A 608-amino-acid polypeptide reads, in one-letter code: UvrABC system protein C (608 aa).

A GIY-YIG domain is found at 16–94 (NRPGVYRMFD…IKEWRPPYNI (79 aa)). The 36-residue stretch at 204-239 (NALADELNVGMEQAAMRLDFEKAAELRDQVAILRRV) folds into the UVR domain.

The protein belongs to the UvrC family. As to quaternary structure, interacts with UvrB in an incision complex.

Its subcellular location is the cytoplasm. Its function is as follows. The UvrABC repair system catalyzes the recognition and processing of DNA lesions. UvrC both incises the 5' and 3' sides of the lesion. The N-terminal half is responsible for the 3' incision and the C-terminal half is responsible for the 5' incision. The chain is UvrABC system protein C from Pseudomonas aeruginosa (strain ATCC 15692 / DSM 22644 / CIP 104116 / JCM 14847 / LMG 12228 / 1C / PRS 101 / PAO1).